The chain runs to 818 residues: Mediator of RNA polymerase II transcription subunit 16 (818 aa).

3 WD repeats span residues 86–125, 296–342, and 615–666; these read SSKS…INLW, LDGR…QSVH, and RLPE…PVYT. Residues 175–524 are interaction with Dif; that stretch reads TLSGFGGVAS…ANFLALKSNI (350 aa).

The protein belongs to the Mediator complex subunit 16 family. In terms of assembly, component of the Mediator complex. Interacts with Dif.

The protein resides in the nucleus. Its function is as follows. Component of the Mediator complex, a coactivator involved in the regulated transcription of nearly all RNA polymerase II-dependent genes. Mediator functions as a bridge to convey information from gene-specific regulatory proteins to the basal RNA polymerase II transcription machinery. Mediator is recruited to promoters by direct interactions with regulatory proteins and serves as a scaffold for the assembly of a functional preinitiation complex with RNA polymerase II and the general transcription factors. Required for activated transcription of the MtnA, MtnB and MtnD genes. Required for transcriptional activation in response to lipopolysacchardie (LPS). The protein is Mediator of RNA polymerase II transcription subunit 16 (MED16) of Drosophila melanogaster (Fruit fly).